Reading from the N-terminus, the 164-residue chain is uncharacterized protein (164 aa).

Its subcellular location is the mitochondrion. This is an uncharacterized protein from Arabidopsis thaliana (Mouse-ear cress).